The chain runs to 317 residues: Ribosomal RNA large subunit methyltransferase F (317 aa).

It belongs to the methyltransferase superfamily. METTL16/RlmF family.

Its subcellular location is the cytoplasm. The catalysed reaction is adenosine(1618) in 23S rRNA + S-adenosyl-L-methionine = N(6)-methyladenosine(1618) in 23S rRNA + S-adenosyl-L-homocysteine + H(+). Its function is as follows. Specifically methylates the adenine in position 1618 of 23S rRNA. The polypeptide is Ribosomal RNA large subunit methyltransferase F (Pseudomonas putida (strain ATCC 47054 / DSM 6125 / CFBP 8728 / NCIMB 11950 / KT2440)).